A 260-amino-acid chain; its full sequence is Phosphate import ATP-binding protein PstB 1 (260 aa).

An ABC transporter domain is found at 13–255 (ISARDLNVHY…PQHPLTQGYI (243 aa)). 45 to 52 (GPSGCGKS) lines the ATP pocket.

This sequence belongs to the ABC transporter superfamily. Phosphate importer (TC 3.A.1.7) family. The complex is composed of two ATP-binding proteins (PstB), two transmembrane proteins (PstC and PstA) and a solute-binding protein (PstS).

It is found in the cell inner membrane. The catalysed reaction is phosphate(out) + ATP + H2O = ADP + 2 phosphate(in) + H(+). In terms of biological role, part of the ABC transporter complex PstSACB involved in phosphate import. Responsible for energy coupling to the transport system. The chain is Phosphate import ATP-binding protein PstB 1 from Paramagnetospirillum magneticum (strain ATCC 700264 / AMB-1) (Magnetospirillum magneticum).